A 462-amino-acid chain; its full sequence is Glutamate--tRNA ligase 1 (462 aa).

The 'HIGH' region motif lies at proline 8–glycine 18. The 'KMSKS' region motif lies at lysine 237–arginine 241. Lysine 240 contacts ATP.

This sequence belongs to the class-I aminoacyl-tRNA synthetase family. Glutamate--tRNA ligase type 1 subfamily. In terms of assembly, monomer.

It is found in the cytoplasm. It carries out the reaction tRNA(Glu) + L-glutamate + ATP = L-glutamyl-tRNA(Glu) + AMP + diphosphate. Functionally, catalyzes the attachment of glutamate to tRNA(Glu) in a two-step reaction: glutamate is first activated by ATP to form Glu-AMP and then transferred to the acceptor end of tRNA(Glu). The sequence is that of Glutamate--tRNA ligase 1 from Campylobacter hominis (strain ATCC BAA-381 / DSM 21671 / CCUG 45161 / LMG 19568 / NCTC 13146 / CH001A).